The primary structure comprises 64 residues: Large ribosomal subunit protein bL28 (64 aa).

A disordered region spans residues 1–23; that stretch reads MARKDQISHRGPLSGNNRSHALN.

It belongs to the bacterial ribosomal protein bL28 family.

The polypeptide is Large ribosomal subunit protein bL28 (Mesomycoplasma hyopneumoniae (strain J / ATCC 25934 / NCTC 10110) (Mycoplasma hyopneumoniae)).